We begin with the raw amino-acid sequence, 209 residues long: MKKLLLTLAMVPAVLFSPTAWGDATDDLLGRLQTLESMKGGFEQVVLDQSGTHMQEALGKFQVARGNRFYWLTETPYEQMAASDGTTVWVYDKDLEQVVVRPLSQDLGQTPALLFGGKPADVAKAFTISERDNRGAEVTYRLTPKGQDPLFDQLDVTFKGGQPASMRLQDALGQQTVIDFIGLTLNDGIDSSLFHFDPPEGTDVIQQQQ.

The signal sequence occupies residues Met-1–Gly-22.

This sequence belongs to the LolA family. In terms of assembly, monomer.

The protein resides in the periplasm. In terms of biological role, participates in the translocation of lipoproteins from the inner membrane to the outer membrane. Only forms a complex with a lipoprotein if the residue after the N-terminal Cys is not an aspartate (The Asp acts as a targeting signal to indicate that the lipoprotein should stay in the inner membrane). In Alcanivorax borkumensis (strain ATCC 700651 / DSM 11573 / NCIMB 13689 / SK2), this protein is Outer-membrane lipoprotein carrier protein.